The chain runs to 249 residues: RNA-free ribonuclease P (249 aa).

The segment at 226–249 (NENEPEYENRDKSKEGSSGEIEFI) is disordered. A compositionally biased stretch (basic and acidic residues) spans 232-242 (YENRDKSKEGS).

Belongs to the HARP family.

It carries out the reaction Endonucleolytic cleavage of RNA, removing 5'-extranucleotides from tRNA precursor.. Its function is as follows. RNA-free RNase P that catalyzes the removal of the 5'-leader sequence from pre-tRNA to produce the mature 5'-terminus. This is RNA-free ribonuclease P from Methanosarcina barkeri (strain Fusaro / DSM 804).